Here is a 2271-residue protein sequence, read N- to C-terminus: Serine-rich adhesin for platelets (2271 aa).

Positions 1–89 (MSKRQKAFHD…VNMLHDQQAF (89 aa)) are cleaved as a signal peptide. The tract at residues 90-230 (AASDAPLTSE…KTSTTSTSTA (141 aa)) is serine-rich repeat region 1, SRR1. The span at 100–111 (LNTQSETVGNQN) shows a compositional bias: polar residues. The tract at residues 100 to 229 (LNTQSETVGN…NKTSTTSTST (130 aa)) is disordered. The span at 112-128 (STTIEASTSTADSTSVT) shows a compositional bias: low complexity. Residues 129-140 (KNSSSVQTSNSD) are compositionally biased toward polar residues. Residues 150 to 229 (VTSTTNSTSN…NKTSTTSTST (80 aa)) show a composition bias toward low complexity. The tract at residues 231–751 (PVKLRTFSRL…TTFKYEVTRN (521 aa)) is non-repeat region (NRR). The segment at 245 to 491 (FASAATTTAV…QQVQFGTFEY (247 aa)) is L-lectin module. Ca(2+) is bound by residues aspartate 365, tyrosine 367, asparagine 369, and aspartate 382. Residues 492 to 571 (TESAVTQVRY…NAGQSVTYYF (80 aa)) form a beta-grasp module region. The segment at 572–659 (TDVKAPTVTV…KSTTTFTINV (88 aa)) is cadherin-like module-1. Ca(2+)-binding residues include aspartate 573, lysine 575, aspartate 601, asparagine 602, aspartate 645, aspartate 661, threonine 663, aspartate 690, asparagine 691, and aspartate 734. Residues 660 to 751 (VDTTAPTVTP…TTFKYEVTRN (92 aa)) are cadherin-like module-2. 2 disordered regions span residues 751-791 (NSMS…VVST) and 806-2242 (SVSA…NGLL). 3 stretches are compositionally biased toward low complexity: residues 752–791 (SMSD…VVST), 806–1392 (SVSA…LSLS), and 1402–2214 (SNSA…ATSE). The tract at residues 752–2232 (SMSDSVSTSG…AQSEKRLPDT (1481 aa)) is serine-rich repeat region 2, SRR2. An LPXTG sorting signal motif is present at residues 2229–2233 (LPDTG). Threonine 2232 carries the pentaglycyl murein peptidoglycan amidated threonine modification. The propeptide at 2233–2271 (GDSIKQNGLLGGVMTLLVGLGLMKRKKKKDENDQDDSQA) is removed by sortase.

The protein belongs to the serine-rich repeat protein (SRRP) family. Proteolytically cleaved by a metalloprotease. Post-translationally, glycosylated. It is probable that most of the Ser residues in SSR1 and SSR2 are O-GlcNAcylated. Sequential glycosylation by sugar transferases are able to generate complex sugar polymorphisms.

The protein resides in the secreted. The protein localises to the cell wall. Functionally, mediates binding to human platelets, possibly through a receptor-ligand interaction. Probably associated with virulence in endovascular infection. Plays a positive role in biofilm formation, possibly by self-association via the non-repeat region (NRR or binding region, BR). Binds to and plays a role in human lung epithelial cell invasion via the L-lectin module of its NRR domain; N-acetylneuraminic acid (Neu5Ac) inhibits binding. Treatment of host cells with neuraminidase decreases adherence of S.aureus cells, suggesting SraP recognizes a host terminal Neu5Ac moiety as a receptor. In Staphylococcus aureus (strain NCTC 8325 / PS 47), this protein is Serine-rich adhesin for platelets.